Here is a 339-residue protein sequence, read N- to C-terminus: Protein pelota homolog (339 aa).

Belongs to the eukaryotic release factor 1 family. Pelota subfamily. Monomer. Requires a divalent metal cation as cofactor.

The protein localises to the cytoplasm. Functionally, may function in recognizing stalled ribosomes, interact with stem-loop structures in stalled mRNA molecules, and effect endonucleolytic cleavage of the mRNA. May play a role in the release non-functional ribosomes and degradation of damaged mRNAs. Has endoribonuclease activity. This chain is Protein pelota homolog, found in Picrophilus torridus (strain ATCC 700027 / DSM 9790 / JCM 10055 / NBRC 100828 / KAW 2/3).